The sequence spans 749 residues: Subtilisin-like protease SBT4.14 (749 aa).

The first 28 residues, 1–28, serve as a signal peptide directing secretion; that stretch reads MIRSKCSCHHHLLVLVMVVLWISPRYAS. Residues 29–115 constitute a propeptide, activation peptide; the sequence is AEDEHAKDFY…VSRNQYRKLH (87 aa). One can recognise an Inhibitor I9 domain in the interval 38–115; sequence YIIYLGDRPD…VSRNQYRKLH (78 aa). The 477-residue stretch at 119-595 folds into the Peptidase S8 domain; sequence SWDFVGLPLT…GGQINPRRAA (477 aa). Asp145 serves as the catalytic Charge relay system. Asn176 is a glycosylation site (N-linked (GlcNAc...) asparagine). The active-site Charge relay system is His210. 4 N-linked (GlcNAc...) asparagine glycosylation sites follow: Asn225, Asn233, Asn446, and Asn458. Ser536 functions as the Charge relay system in the catalytic mechanism. Asn618 carries an N-linked (GlcNAc...) asparagine glycan.

The protein belongs to the peptidase S8 family. Post-translationally, the C-terminal propeptide is autocleaved. In terms of tissue distribution, expressed only in roots, particularly in xylem.

The polypeptide is Subtilisin-like protease SBT4.14 (Arabidopsis thaliana (Mouse-ear cress)).